A 547-amino-acid polypeptide reads, in one-letter code: uncharacterized protein (547 aa).

To B.pertussis prn N-terminal region.

This is an uncharacterized protein from Escherichia coli O157:H7.